The chain runs to 818 residues: Cytosolic phospholipase A2 delta (818 aa).

Residues 5–124 (SPGGPPGHPY…LPGKLLRKTF (120 aa)) enclose the C2 domain. Ca(2+)-binding residues include Asp-38, Asp-44, Asp-94, Asp-96, and Asp-102. Residues 273–818 (GCPEELAVHL…LEARPPRAQT (546 aa)) enclose the PLA2c domain. 330–331 (GG) is a substrate binding site. Ser-361 serves as the catalytic Nucleophile. Catalysis depends on Asp-647, which acts as the Proton acceptor.

Ca(2+) is required as a cofactor. In terms of tissue distribution, expressed in stratified squamous epithelia, such as those in skin and cervix, but not in other tissues. Strongly expressed in the upper spinous layer of the psoriatic epidermis, expressed weakly and discontinuously in atopic dermatitis and mycosis fungoides, and not detected in the epidermis of normal skin.

It localises to the cytoplasm. The protein resides in the cytosol. The protein localises to the membrane. The catalysed reaction is a 1,2-diacyl-sn-glycero-3-phosphocholine + H2O = a 1-acyl-sn-glycero-3-phosphocholine + a fatty acid + H(+). It carries out the reaction 1-hexadecanoyl-2-(5Z,8Z,11Z,14Z-eicosatetraenoyl)-sn-glycero-3-phosphocholine + H2O = 1-hexadecanoyl-sn-glycero-3-phosphocholine + (5Z,8Z,11Z,14Z)-eicosatetraenoate + H(+). It catalyses the reaction 1-hexadecanoyl-2-(9Z,12Z-octadecadienoyl)-sn-glycero-3-phosphocholine + H2O = (9Z,12Z)-octadecadienoate + 1-hexadecanoyl-sn-glycero-3-phosphocholine + H(+). The enzyme catalyses 1-hexadecanoyl-2-(9Z-octadecenoyl)-sn-glycero-3-phosphocholine + H2O = 1-hexadecanoyl-sn-glycero-3-phosphocholine + (9Z)-octadecenoate + H(+). The catalysed reaction is 1-hexadecanoyl-2-(5Z,8Z,11Z,14Z-eicosatetraenoyl)-sn-glycero-3-phosphoethanolamine + H2O = 1-hexadecanoyl-sn-glycero-3-phosphoethanolamine + (5Z,8Z,11Z,14Z)-eicosatetraenoate + H(+). It carries out the reaction 1-hexadecanoyl-2-(9Z,12Z-octadecadienoyl)-sn-glycero-3-phosphoethanolamine + H2O = 1-hexadecanoyl-sn-glycero-3-phosphoethanolamine + (9Z,12Z)-octadecadienoate + H(+). The protein operates within lipid metabolism; fatty acid metabolism. With respect to regulation, stimulated by cytosolic Ca(2+). Its function is as follows. Calcium-dependent phospholipase A2 that selectively hydrolyzes glycerophospholipids in the sn-2 position. Has a preference for linoleic acid at the sn-2 position. This chain is Cytosolic phospholipase A2 delta, found in Homo sapiens (Human).